The chain runs to 50 residues: Small ribosomal subunit protein uS14 (50 aa).

4 residues coordinate Zn(2+): C15, C18, C33, and C36.

This sequence belongs to the universal ribosomal protein uS14 family. Zinc-binding uS14 subfamily. Part of the 30S ribosomal subunit. Zn(2+) is required as a cofactor.

Binds 16S rRNA, required for the assembly of 30S particles. The protein is Small ribosomal subunit protein uS14 of Methanothermobacter thermautotrophicus (strain ATCC 29096 / DSM 1053 / JCM 10044 / NBRC 100330 / Delta H) (Methanobacterium thermoautotrophicum).